Consider the following 461-residue polypeptide: Cysteine--tRNA ligase (461 aa).

Cys30 contacts Zn(2+). Positions 32–42 match the 'HIGH' region motif; sequence VTVYDLCHIGH. Zn(2+) is bound by residues Cys211, His236, and Glu240. The short motif at 268–272 is the 'KMSKS' region element; that stretch reads KMSKS. Lys271 serves as a coordination point for ATP.

This sequence belongs to the class-I aminoacyl-tRNA synthetase family. Monomer. Zn(2+) is required as a cofactor.

The protein localises to the cytoplasm. It carries out the reaction tRNA(Cys) + L-cysteine + ATP = L-cysteinyl-tRNA(Cys) + AMP + diphosphate. The sequence is that of Cysteine--tRNA ligase from Shewanella sp. (strain MR-4).